The chain runs to 374 residues: Speckle-type POZ protein (374 aa).

The MATH domain occupies 31 to 161 (KFSYMWTINN…DDKLTLFCEV (131 aa)). The required for nuclear localization stretch occupies residues 71–191 (VNPKGLDEES…PDCRLADELG (121 aa)). Residues 173 to 297 (QNTMNMVKVP…MCEDALCTSL (125 aa)) form the BTB domain. Residues 297–355 (LSVENAAEILILADLHSADQLKTQAVDFINYHASDVMETSGWKSMVASHPHLVAEAYRS) form a homodimerization region.

It belongs to the Tdpoz family. Homodimer. Part of cullin-RING-based BCR (BTB-CUL3-RBX1) E3 ubiquitin-protein ligase complexes that contain CUL3 and SPOP, plus a target protein.

The protein localises to the nucleus. It localises to the nucleus speckle. Its pathway is protein modification; protein ubiquitination. Its function is as follows. Component of a cullin-RING-based BCR (BTB-CUL3-RBX1) E3 ubiquitin-protein ligase complex that mediates the ubiquitination of target proteins, leading most often to their proteasomal degradation. The polypeptide is Speckle-type POZ protein (spop) (Danio rerio (Zebrafish)).